The primary structure comprises 187 residues: LSM complex subunit LSM4 (187 aa).

A Sm domain is found at 2–85 (LPLYLLTNAK…IKFIKLQDNI (84 aa)). The disordered stretch occupies residues 93–187 (INSNNNSNSN…NSSSPQKVEF (95 aa)). Residues 112-167 (NRDSNNNRGNYNRRNNNNGNSNRRPYSQNRQYNNSNSSNINNSINSINSNNQNMNN) are compositionally biased toward low complexity. Position 119 is an omega-N-methylarginine (Arg119). The segment covering 175 to 187 (HHFNSSSPQKVEF) has biased composition (polar residues). Ser181 is subject to Phosphoserine.

Belongs to the snRNP Sm proteins family. In terms of assembly, component of the heptameric LSM1-LSM7 complex that forms a seven-membered ring structure with a donut shape. The LSm subunits are arranged in the order LSM1, LSM2, LSM3, LSM6, LSM5, LSM7 and LSM4. Except for LSM1, where a C-terminal helix crosses the ring structure to form additional interactions with LSM3 and LSM6, each subunit interacts only with its two neighboring subunits. The LSM1-LSM7 complex interacts with PAT1; within the complex PAT1 has direct interactions with LSM2 and LSM3. The LSM1-LSM7 complex interacts with XRN1. Component of the heptameric LSM2-LSM8 complex that forms a seven-membered ring structure with a donut shape; an RNA strand can pass through the hole in the center of the ring structure. The LSm subunits are arranged in the order LSM8, LSM2, LSM3, LSM6, LSM5, LSM7 and LSM4. Component of the spliceosome U4/U6-U5 tri-snRNP complex composed of the U4, U6 and U5 snRNAs and at least PRP3, PRP4, PRP6, PRP8, PRP18, PRP31, PRP38, SNU13, SNU23, SNU66, SNU114, SPP381, SMB1, SMD1, SMD2, SMD3, SMX2, SMX3, LSM2, LSM3, LSM4, LSM5, LSM6, LSM7, LSM8, BRR2 and DIB1. May be found in a complex comprising LSM2-LSM7 without LSM1 or LSM8; the complex associates with pre-P RNA and snoRNA SNR5.

The protein resides in the nucleus. It is found in the cytoplasm. Its function is as follows. Component of LSm protein complexes, which are involved in RNA processing and may function in a chaperone-like manner. Component of the cytoplasmic LSM1-LSM7 complex which is involved in mRNA degradation by activating the decapping step. Together with PAT1, the LSM1-LSM7 complex binds to osmotic stress-activated mRNAs to attenuate the osmotic stress response, probably by limiting ribosome access to the mRNA and consequently translation. Component of the nuclear LSM2-LSM8 complex, which is involved in spliceosome assembly. The LSM2-LSM8 complex plays a role in the biogenesis of the spliceosomal U4/U6-U5 tri-snRNP complex by accelerating PRP24-mediated annealing of U4/U6 di-snRNA. The LSM2-LSM8 complex binds U6 snRNA terminating with a non-cyclic 3' phosphate group. LSM2-LSM8 is probably also involved in degradation of nuclear pre-mRNA by targeting them for decapping. LSM2-LSM8 could be involved in processing of pre-tRNAs, pre-rRNAs and U3 snoRNA, although involvement may be indirect. In a complex that probably contains LSM2-LSM7, but not LSM1 or LSM8, associates with the precursor of the RNA component of RNase P (pre-P RNA) and may be involved in maturing pre-P RNA; the complex also associates with snoRNA SNR5. The sequence is that of LSM complex subunit LSM4 from Saccharomyces cerevisiae (strain ATCC 204508 / S288c) (Baker's yeast).